Reading from the N-terminus, the 331-residue chain is Carbonic anhydrase-related protein 11 (331 aa).

The first 23 residues, Met-1–Ala-23, serve as a signal peptide directing secretion. An Alpha-carbonic anhydrase domain is found at Asp-33 to Arg-306. Residues Asn-118, Asn-170, Asn-189, and Asn-263 are each glycosylated (N-linked (GlcNAc...) asparagine). The interval Arg-303–Arg-331 is disordered. Positions Leu-322–Arg-331 are enriched in basic and acidic residues.

The protein belongs to the alpha-carbonic anhydrase family.

It is found in the secreted. Functionally, does not have a catalytic activity. The chain is Carbonic anhydrase-related protein 11 (CA11) from Sus scrofa (Pig).